The primary structure comprises 381 residues: MNDSLQAIPNQPFSFFTQASCSHTQARAGQFFTPHGVVETPRFMPVGTLANIKTVTPEQLRGTGAQMILANTYHLHLQPGEGIVAAAGGLHRFMGWTGPILTDSGGFQVFSLSELRSIAEAGVTFRSPRDGEEIYLSPEKAIAIQNQLGADVIMAFDECAPYPADRSTVTEAVERTTRWLERCCKAHDRVEDQALFGIIQGGTYGDLRQQSARSLVEFDLPGYAIGGVSVGEPPELIEKIVKFTTPLLPEHKPRYLMGVGTYREMVQAIAAGIDLFDCVIPTRLARHGNALVRGERWNLKNSRFREDFQPLDQSCACYTCQNFSRAYLSHLLRARELLAYTLLSIHNITELISFTQKIRQAILHDRFSSEFASWLTSPSPS.

Residue aspartate 103 is the Proton acceptor of the active site. Residues 103-107 (DSGGF), aspartate 157, glutamine 200, and glycine 227 contribute to the substrate site. The interval 258 to 264 (GVGTYRE) is RNA binding. The active-site Nucleophile is aspartate 277. Positions 282–286 (TRLAR) are RNA binding; important for wobble base 34 recognition. Residues cysteine 315, cysteine 317, cysteine 320, and histidine 346 each coordinate Zn(2+).

Belongs to the queuine tRNA-ribosyltransferase family. Homodimer. Within each dimer, one monomer is responsible for RNA recognition and catalysis, while the other monomer binds to the replacement base PreQ1. The cofactor is Zn(2+).

It carries out the reaction 7-aminomethyl-7-carbaguanine + guanosine(34) in tRNA = 7-aminomethyl-7-carbaguanosine(34) in tRNA + guanine. The protein operates within tRNA modification; tRNA-queuosine biosynthesis. Its function is as follows. Catalyzes the base-exchange of a guanine (G) residue with the queuine precursor 7-aminomethyl-7-deazaguanine (PreQ1) at position 34 (anticodon wobble position) in tRNAs with GU(N) anticodons (tRNA-Asp, -Asn, -His and -Tyr). Catalysis occurs through a double-displacement mechanism. The nucleophile active site attacks the C1' of nucleotide 34 to detach the guanine base from the RNA, forming a covalent enzyme-RNA intermediate. The proton acceptor active site deprotonates the incoming PreQ1, allowing a nucleophilic attack on the C1' of the ribose to form the product. After dissociation, two additional enzymatic reactions on the tRNA convert PreQ1 to queuine (Q), resulting in the hypermodified nucleoside queuosine (7-(((4,5-cis-dihydroxy-2-cyclopenten-1-yl)amino)methyl)-7-deazaguanosine). The chain is Queuine tRNA-ribosyltransferase from Cyanothece sp. (strain PCC 7425 / ATCC 29141).